Here is a 289-residue protein sequence, read N- to C-terminus: Rhodopsin (289 aa).

Over 1 to 7 (YLVNPAA) the chain is Extracellular. The helical transmembrane segment at 8-32 (YAALGAYMFLLILIGFPINFLTLYV) threads the bilayer. The Cytoplasmic segment spans residues 33 to 44 (TLEHKKLRTPLN). A helical transmembrane segment spans residues 45–67 (YILLNLAVANLFMVLGGFTTTMY). The Extracellular segment spans residues 68–81 (TSMHGYFVLGRLGC). Cys-81 and Cys-158 are disulfide-bonded. Residues 82–104 (NLEAFFATLGGEIALWSLVVLAI) traverse the membrane as a helical segment. Positions 105-107 (ERW) match the 'Ionic lock' involved in activated form stabilization motif. Topologically, residues 105–123 (ERWIVVCKPISNFRFTEDH) are cytoplasmic. Residues 124-144 (AIMGLAFTWVMALACAVPPLV) traverse the membrane as a helical segment. Residues 145-173 (GWSRYIPEGMQCSCGVDYYTRAEGFNNES) lie on the Extracellular side of the membrane. N-linked (GlcNAc...) asparagine glycosylation is present at Asn-171. Residues 174–195 (FVIYMFIVHFLIPLSVIFFCYG) form a helical membrane-spanning segment. Residues 196 to 223 (RLLCAVKEAPAAQQESETTQRAEKEVSR) are Cytoplasmic-facing. The chain crosses the membrane as a helical span at residues 224 to 245 (MVVIMVIGFLVCWLPYASVAWW). At 246–257 (IFCNQGSDFGPI) the chain is on the extracellular side. A helical transmembrane segment spans residues 258–279 (FMTLPSFFAKSAAIYNPMIYIC). The residue at position 267 (Lys-267) is an N6-(retinylidene)lysine. Over 280 to 289 (MNKQFRHCMI) the chain is Cytoplasmic.

Belongs to the G-protein coupled receptor 1 family. Opsin subfamily. Post-translationally, phosphorylated on some or all of the serine and threonine residues present in the C-terminal region. In terms of processing, contains one covalently linked retinal chromophore.

It is found in the membrane. Its subcellular location is the cell projection. The protein localises to the cilium. The protein resides in the photoreceptor outer segment. Functionally, photoreceptor required for image-forming vision at low light intensity. While most salt water fish species use retinal as chromophore, most freshwater fish use 3-dehydroretinal, or a mixture of retinal and 3-dehydroretinal. Light-induced isomerization of 11-cis to all-trans retinal triggers a conformational change that activates signaling via G-proteins. Subsequent receptor phosphorylation mediates displacement of the bound G-protein alpha subunit by arrestin and terminates signaling. The protein is Rhodopsin (rho) of Abyssocottus korotneffi (Baikalian deep-water sculpin).